A 950-amino-acid chain; its full sequence is MGVPAFFRWLSRKYPSIIVNCVEEKPKECNGVKIPVDASKPNPNDVEFDNLYLDMNGIIHPCTHPEDKPAPKNEDEMMVAIFEYIDRLFSIVRPRRLLYMAIDGVAPRAKMNQQRSRRFRASKEGMEAAVEKQRVREEILAKGGFLPPEEIKERFDSNCITPGTEFMDNLAKCLRYYIADRLNNDPGWKNLTVILSDASAPGEGEHKIMDYIRRQRAQPNHDPNTHHCLCGADADLIMLGLATHEPNFTIIREEFKPNKPKPCGLCNQFGHEVKDCEGLPREKKGKHDELADSLPCAEGEFIFLRLNVLREYLERELTMASLPFTFDVERSIDDWVFMCFFVGNDFLPHLPSLEIRENAIDRLVNIYKNVVHKTGGYLTESGYVNLQRVQMIMLAVGEVEDSIFKKRKDDEDSFRRRQKEKRKRMKRDQPAFTPSGILTPHALGSRNSPGSQVASNPRQAAYEMRMQNNSSPSISPNTSFTSDGSPSPLGGIKRKAEDSDSEPEPEDNVRLWEAGWKQRYYKNKFDVDAADEKFRRKVVQSYVEGLCWVLRYYYQGCASWKWYYPFHYAPFASDFEGIADMPSDFEKGTKPFKPLEQLMGVFPAASGNFLPPSWRKLMSDPDSSIIDFYPEDFAIDLNGKKYAWQGVALLPFVDERRLRAALEEVYPDLTPEETRRNSLGGDVLFVGKHHPLHDFILELYQTGSTEPVEVPPELCHGIQGKFSLDEEAILPDQIVCSPVPMLRDLTQNTVVSINFKDPQFAEDYIFKAVMLPGARKPAAVLKPSDWEKSSNGRQWKPQLGFNRDRRPVHLDQAAFRTLGHVMPRGSGTGIYSNAAPPPVTYQGNLYRPLLRGQAQIPKLMSNMRPQDSWRGPPPLFQQQRFDRGVGAEPLLPWNRMLQTQNAAFQPNQYQMLAGPGGYPPRRDDRGGRQGYPREGRKYPLPPPSGRYNWN.

The CCHC-type zinc-finger motif lies at 262–278 (PCGLCNQFGHEVKDCEG). The residue at position 286 (K286) is an N6-acetyllysine. The disordered stretch occupies residues 408 to 508 (KDDEDSFRRR…SDSEPEPEDN (101 aa)). The span at 416–426 (RRQKEKRKRMK) shows a compositional bias: basic residues. Position 439 is a phosphothreonine (T439). Residues 445 to 458 (SRNSPGSQVASNPR) are compositionally biased toward polar residues. Residues S448, S471, S473, S475, S482, S487, S499, S501, and S678 each carry the phosphoserine modification. Low complexity predominate over residues 468–482 (NNSSPSISPNTSFTS). R824, R847, and R851 each carry asymmetric dimethylarginine; alternate. 3 positions are modified to omega-N-methylarginine; alternate: R824, R847, and R851. Asymmetric dimethylarginine is present on R880. R883 carries the post-translational modification Asymmetric dimethylarginine; alternate. Position 883 is an omega-N-methylarginine; alternate (R883). The residue at position 895 (R895) is an Omega-N-methylarginine. Positions 911-950 (MLAGPGGYPPRRDDRGGRQGYPREGRKYPLPPPSGRYNWN) are disordered. Residues 920-937 (PRRDDRGGRQGYPREGRK) show a composition bias toward basic and acidic residues. R946 carries the post-translational modification Asymmetric dimethylarginine; alternate. R946 is subject to Omega-N-methylarginine; alternate.

The protein belongs to the 5'-3' exonuclease family. XRN2/RAT1 subfamily. As to quaternary structure, interacts with POLR2A and SMN1/SMN2. Interacts with CDKN2AIP and NKRF. Interacts with CDKN2AIPNL; the interaction is direct. Interacts with TRIM71 (via NHL repeats) in an RNA-dependent manner. Interacts with DHX34; the interaction is RNA-independent. Expressed in the spleen, thymus, prostate, testis, ovary, small intestine, colon, peripheral blood leukocytes, heart, brain, placenta, lung, liver, skeletal muscle, kidney, and pancreas. Isoform 2 is expressed predominantly in peripheral blood leukocytes.

Its subcellular location is the nucleus. The protein localises to the nucleolus. Its function is as follows. Possesses 5'-&gt;3' exoribonuclease activity. May promote the termination of transcription by RNA polymerase II. During transcription termination, cleavage at the polyadenylation site liberates a 5' fragment which is subsequently processed to form the mature mRNA and a 3' fragment which remains attached to the elongating polymerase. The processive degradation of this 3' fragment by this protein may promote termination of transcription. Binds to RNA polymerase II (RNAp II) transcription termination R-loops formed by G-rich pause sites. The chain is 5'-3' exoribonuclease 2 (XRN2) from Homo sapiens (Human).